Reading from the N-terminus, the 407-residue chain is uncharacterized protein (407 aa).

The next 11 helical transmembrane spans lie at 13 to 30 (IVFT…SPFL), 40 to 62 (VTPL…YYVL), 67 to 89 (ILGM…YNII), 118 to 140 (LAFA…VFSG), 147 to 169 (VYER…IRRL), 179 to 199 (AVGL…YYNY), 253 to 271 (WISG…SVFV), 281 to 303 (TEII…FGPL), 334 to 356 (GYLI…EIIA), 361 to 378 (AFAF…LVSF), and 385 to 402 (QFLV…IVLF).

The protein resides in the cell membrane. This is an uncharacterized protein from Aquifex aeolicus (strain VF5).